Here is a 120-residue protein sequence, read N- to C-terminus: Large ribosomal subunit protein uL18 (120 aa).

The protein belongs to the universal ribosomal protein uL18 family. Part of the 50S ribosomal subunit; part of the 5S rRNA/L5/L18/L25 subcomplex. Contacts the 5S and 23S rRNAs.

Functionally, this is one of the proteins that bind and probably mediate the attachment of the 5S RNA into the large ribosomal subunit, where it forms part of the central protuberance. In Bacillus cereus (strain G9842), this protein is Large ribosomal subunit protein uL18.